Here is a 166-residue protein sequence, read N- to C-terminus: MELDLALDREEGALQASEIGDLLDETVWLQQLEHWLQIVCGDESLDCPTLVRSAEELSLGLRFIDDATIADLNSTWRQKTGPTDVLSFAALDDAGDWMEGPSIELGDIVVSLETARRQAQEQGHSLQQELRWLVSHGLLHLLGWDHPDEKSLATMLALQERLLGDG.

Zn(2+)-binding residues include His-136, His-140, and His-146.

Belongs to the endoribonuclease YbeY family. Zn(2+) serves as cofactor.

Its subcellular location is the cytoplasm. Functionally, single strand-specific metallo-endoribonuclease involved in late-stage 70S ribosome quality control and in maturation of the 3' terminus of the 16S rRNA. This chain is Endoribonuclease YbeY, found in Synechococcus sp. (strain CC9605).